A 401-amino-acid polypeptide reads, in one-letter code: tRNA(Met) cytidine acetate ligase (401 aa).

Residues 7–20, Gly102, Asn164, and Arg189 each bind ATP; that span reads IVEYNPFHNGHLYH.

It belongs to the TmcAL family.

It localises to the cytoplasm. It carries out the reaction cytidine(34) in elongator tRNA(Met) + acetate + ATP = N(4)-acetylcytidine(34) in elongator tRNA(Met) + AMP + diphosphate. Functionally, catalyzes the formation of N(4)-acetylcytidine (ac(4)C) at the wobble position of elongator tRNA(Met), using acetate and ATP as substrates. First activates an acetate ion to form acetyladenylate (Ac-AMP) and then transfers the acetyl group to tRNA to form ac(4)C34. This is tRNA(Met) cytidine acetate ligase from Thermoanaerobacter sp. (strain X514).